The chain runs to 248 residues: Protein PARTING DANCERS homolog (248 aa).

Over residues 1–10 (MERSTHSTGW) the composition is skewed to polar residues. A disordered region spans residues 1 to 25 (MERSTHSTGWTCLPPPPPEPAAPGR).

Belongs to the ERCC1/RAD10/SWI10 family. Interacts with SHOC1 (via C-terminus). Interacts with HEI10. As to expression, highly expressed in anthers and pistil during meiosis. Expressed in pollen mother cells (PMCs) during meiosis. Expressed at low levels in roots, shoots, leaves, flowers, and glumes.

Its subcellular location is the chromosome. It is found in the nucleus. The protein resides in the cytoplasm. The protein localises to the cell membrane. Its function is as follows. Essential for normal crossover (CO) formation during meiosis. Essential component for the formation of class I meiotic COs. Interacts with SHOC1, another meiotic component, to regulate CO formation, possibly by stabilizing the recombination intermediates during meiosis. PTD and SHOC1 may form transient heterotrimeric or heterotetrameric complexes with HEI10 and/or ZIP4 to promote class I COs formation. Does not seem to be involved in early meiotic recombination steps involving double-strand break (DSB) formation, processing, and single-strand invasion. Does not seem to be involved in homologous pairing or synaptonemal complex (SC) assembly. The sequence is that of Protein PARTING DANCERS homolog from Oryza sativa subsp. japonica (Rice).